The following is a 330-amino-acid chain: uncharacterized protein (330 aa).

2 disordered regions span residues 136–160 and 172–314; these read VPPS…DESS and DNEK…SQFN. The segment covering 223–235 has biased composition (pro residues); that stretch reads PKPPAPPPPPPVP. Positions 236–246 are enriched in low complexity; sequence ISMTPAAISVT. 3 stretches are compositionally biased toward polar residues: residues 263 to 276, 284 to 294, and 304 to 314; these read AQST…TTDE, TRSSSQSNSTV, and PASSPTFSQFN.

This is an uncharacterized protein from Danio rerio (Zebrafish).